We begin with the raw amino-acid sequence, 270 residues long: Phosphonoacetaldehyde hydrolase (270 aa).

The Nucleophile role is filled by Asp11. Mg(2+) is bound by residues Asp11 and Ala13. Lys53 (schiff-base intermediate with substrate) is an active-site residue. Asp187 contributes to the Mg(2+) binding site.

This sequence belongs to the HAD-like hydrolase superfamily. PhnX family. In terms of assembly, homodimer. The cofactor is Mg(2+).

The catalysed reaction is phosphonoacetaldehyde + H2O = acetaldehyde + phosphate + H(+). Functionally, involved in phosphonate degradation. The polypeptide is Phosphonoacetaldehyde hydrolase (Salmonella enteritidis PT4 (strain P125109)).